Reading from the N-terminus, the 360-residue chain is Peptide chain release factor 1 (360 aa).

N5-methylglutamine is present on Gln235. The tract at residues 284–312 is disordered; the sequence is ERQAQAQADTRRNLLGSGDRSDKIRTYNY.

The protein belongs to the prokaryotic/mitochondrial release factor family. Post-translationally, methylated by PrmC. Methylation increases the termination efficiency of RF1.

The protein localises to the cytoplasm. Peptide chain release factor 1 directs the termination of translation in response to the peptide chain termination codons UAG and UAA. In Histophilus somni (strain 129Pt) (Haemophilus somnus), this protein is Peptide chain release factor 1.